The primary structure comprises 430 residues: Histidine--tRNA ligase (430 aa).

Belongs to the class-II aminoacyl-tRNA synthetase family. Homodimer.

It localises to the cytoplasm. It catalyses the reaction tRNA(His) + L-histidine + ATP = L-histidyl-tRNA(His) + AMP + diphosphate + H(+). This is Histidine--tRNA ligase (hisS) from Chlamydia pneumoniae (Chlamydophila pneumoniae).